The chain runs to 804 residues: Ribonucleoside-diphosphate reductase large subunit (804 aa).

In terms of domain architecture, ATP-cone spans 1-92 (MYVLNRKGEE…TDNLHKNTSD (92 aa)). Residues 5–6 (NR), 11–17 (EDISFDQ), Thr53, and Asp57 contribute to the ATP site. Ser216 contacts GDP. Residues Cys217 and Cys442 are joined by a disulfide bond. DTTP is bound by residues 225–227 (DSI), Lys242, Arg255, and 262–263 (RG). Asn425 lines the GDP pocket. The active-site Proton acceptor is the Asn425. Cys427 acts as the Cysteine radical intermediate in catalysis. Residues Glu429 and 603 to 606 (TAST) contribute to the GDP site. Glu429 functions as the Proton acceptor in the catalytic mechanism.

This sequence belongs to the ribonucleoside diphosphate reductase large chain family. As to quaternary structure, heterodimer of a large and a small subunit.

It catalyses the reaction a 2'-deoxyribonucleoside 5'-diphosphate + [thioredoxin]-disulfide + H2O = a ribonucleoside 5'-diphosphate + [thioredoxin]-dithiol. With respect to regulation, under complex allosteric control mediated by deoxynucleoside triphosphates and ATP binding to separate specificity and activation sites on the large subunit. The type of nucleotide bound at the specificity site determines substrate preference. It seems probable that ATP makes the enzyme reduce CDP and UDP, dGTP favors ADP reduction and dTTP favors GDP reduction. Stimulated by ATP and inhibited by dATP binding to the activity site. Provides the precursors necessary for DNA synthesis. Catalyzes the biosynthesis of deoxyribonucleotides from the corresponding ribonucleotides. The chain is Ribonucleoside-diphosphate reductase large subunit (RNR1) from Plasmodium falciparum (isolate FCR-3 / Gambia).